A 288-amino-acid polypeptide reads, in one-letter code: UTP--glucose-1-phosphate uridylyltransferase (288 aa).

This sequence belongs to the UDPGP type 2 family.

It carries out the reaction alpha-D-glucose 1-phosphate + UTP + H(+) = UDP-alpha-D-glucose + diphosphate. It functions in the pathway glycolipid metabolism; diglucosyl-diacylglycerol biosynthesis. Its function is as follows. Catalyzes the formation of UDP-glucose from glucose-1-phosphate and UTP. This is an intermediate step in the biosynthesis of diglucosyl-diacylglycerol (Glc2-DAG), i.e. a glycolipid found in the membrane, which is also used as a membrane anchor for lipoteichoic acid (LTA). The protein is UTP--glucose-1-phosphate uridylyltransferase (gtaB) of Staphylococcus epidermidis (strain ATCC 35984 / DSM 28319 / BCRC 17069 / CCUG 31568 / BM 3577 / RP62A).